The following is a 199-amino-acid chain: Inosine triphosphate pyrophosphatase (199 aa).

Residue 12 to 17 (TGNAKK) coordinates ITP. Residue E42 participates in Mg(2+) binding. Residues K54, 70–71 (DT), K87, 146–149 (FGWD), K169, and 174–175 (HR) each bind ITP.

It belongs to the HAM1 NTPase family. Homodimer. Mg(2+) serves as cofactor. Requires Mn(2+) as cofactor.

The protein resides in the cytoplasm. The enzyme catalyses ITP + H2O = IMP + diphosphate + H(+). It carries out the reaction dITP + H2O = dIMP + diphosphate + H(+). The catalysed reaction is XTP + H2O = XMP + diphosphate + H(+). In terms of biological role, pyrophosphatase that hydrolyzes non-canonical purine nucleotides such as inosine triphosphate (ITP), deoxyinosine triphosphate (dITP) or xanthosine 5'-triphosphate (XTP) to their respective monophosphate derivatives. The enzyme does not distinguish between the deoxy- and ribose forms. Probably excludes non-canonical purines from RNA and DNA precursor pools, thus preventing their incorporation into RNA and DNA and avoiding chromosomal lesions. The sequence is that of Inosine triphosphate pyrophosphatase from Monosiga brevicollis (Choanoflagellate).